Consider the following 226-residue polypeptide: MYSIKCDDNKAMPRERLMRLGAESLSNQELLAILLRTGNKEKHVLELSSYLLSHLDSLADFKKMSLQELQHLAGIGKVKAIEIKAMIELVSRILATDKTLTDSVLTSVQVAEKMMAALGDKKQEHLVVLYLDNQNRIIEEKTIFIGTVRRSLAEPREILYYACKNMATSLIVIHNHPSGNIEPSSNDYCFTEKIKRSCEDLGIICLDHIIVSYKDYYSFREKSTLF.

In terms of domain architecture, MPN spans 103 to 225 (SVLTSVQVAE…YYSFREKSTL (123 aa)). His174, His176, and Asp187 together coordinate Zn(2+). Positions 174–187 (HNHPSGNIEPSSND) match the JAMM motif motif.

Belongs to the UPF0758 family.

The sequence is that of UPF0758 protein Spy49_0870 from Streptococcus pyogenes serotype M49 (strain NZ131).